We begin with the raw amino-acid sequence, 94 residues long: Integration host factor subunit beta (94 aa).

This sequence belongs to the bacterial histone-like protein family. In terms of assembly, heterodimer of an alpha and a beta chain.

Functionally, this protein is one of the two subunits of integration host factor, a specific DNA-binding protein that functions in genetic recombination as well as in transcriptional and translational control. The chain is Integration host factor subunit beta from Caulobacter sp. (strain K31).